Reading from the N-terminus, the 305-residue chain is Autophagy-related protein 27 (305 aa).

Residues 1-22 form the signal peptide; it reads MARYKGLSILSLFAVFSSLASA. Residues 23 to 242 are Lumenal-facing; it reads ELDCSNIKVD…EDGGSAPSGH (220 aa). Positions 24-231 constitute an MRH domain; it reads LDCSNIKVDG…EWKTKYACEN (208 aa). 2 cysteine pairs are disulfide-bonded: Cys26–Cys66 and Cys74–Cys81. N-linked (GlcNAc...) asparagine glycosylation is present at Asn58. N-linked (GlcNAc...) asparagine glycosylation occurs at Asn85. A disulfide bond links Cys156 and Cys229. A disordered region spans residues 163-202; that stretch reads LEGLESPKPDGDKKKDGEKKDDDKKDNKDKEGKSKRDGEE. Residues 243-263 form a helical membrane-spanning segment; it reads WGFFTWVIVLYVVLVSLPLLS. The Cytoplasmic segment spans residues 264 to 305; it reads ERVTNVRCHSQPVPVHFGLSDIRLVAQLQPVWSSRVGLASSQ.

It belongs to the ATG27 family.

The protein localises to the cytoplasmic vesicle membrane. The protein resides in the golgi apparatus membrane. It is found in the mitochondrion membrane. Its subcellular location is the preautophagosomal structure membrane. Its function is as follows. Effector of phosphatidylinositol 3-phosphate kinase signaling. Regulates the cytoplasm to vacuole transport (Cvt) vesicle formation. Plays a role in ATG protein retrieval from the pre-autophagosomal structure (PAS). The polypeptide is Autophagy-related protein 27 (Arthroderma benhamiae (strain ATCC MYA-4681 / CBS 112371) (Trichophyton mentagrophytes)).